The chain runs to 500 residues: MHIIHIASELAPLAKVGGLADVVLGLCRELSWKGHDVDIIIPKYDCMDSEQIRDLTVDYFELPSFYNGEWFFNTVWMGWVENLKVYFIEPHHPRFFFNRGCFYGCEDDLERFLYFSRTALEFLYKKSILPDIIHLHDWQTAVIAPLYKDMYQKLGYTKPKILFTIHNMEYQGKCAAHDLNYIGLDGNRYQQHSFMQDNLYPHLINLLKGGIVYSDFVTTVSPNYAKEVLTPKEGRGLEATLVEYQHKFKGILNGIDYSYWNPEIDRFLPAHYSLREMPKNKKDRNTVDKKGFIKKILREKLYLAEEHRPIIGCITRLVPQKGIDLIKHTIRHIVEKKGQFILLGSSPIPSINDEFHRLKHQYTDHPHIHLILHHSEELAHLIYAGSDMFIVPSLFEPCGLTQIIALKYGTVPIVRRTGGLADTIIDVDHTDQQPDKKNGYVFDDPDANGIDSAIDRAIHCWFEEPEKWRQLMLNGMKMDFSWNQSSDCYLKIYQAISAKN.

Lys-15 lines the ADP-alpha-D-glucose pocket.

This sequence belongs to the glycosyltransferase 1 family. Bacterial/plant glycogen synthase subfamily.

The catalysed reaction is [(1-&gt;4)-alpha-D-glucosyl](n) + ADP-alpha-D-glucose = [(1-&gt;4)-alpha-D-glucosyl](n+1) + ADP + H(+). It participates in glycan biosynthesis; glycogen biosynthesis. Its function is as follows. Synthesizes alpha-1,4-glucan chains using ADP-glucose. The polypeptide is Glycogen synthase (Protochlamydia amoebophila (strain UWE25)).